Reading from the N-terminus, the 354-residue chain is DNA polymerase IV 2 (354 aa).

The region spanning 4 to 184 (IIHIDMDAFY…LPVKKFHGVG (181 aa)) is the UmuC domain. 2 residues coordinate Mg(2+): Asp8 and Asp102. Glu103 is a catalytic residue.

It belongs to the DNA polymerase type-Y family. As to quaternary structure, monomer. Mg(2+) is required as a cofactor.

Its subcellular location is the cytoplasm. It catalyses the reaction DNA(n) + a 2'-deoxyribonucleoside 5'-triphosphate = DNA(n+1) + diphosphate. Functionally, poorly processive, error-prone DNA polymerase involved in untargeted mutagenesis. Copies undamaged DNA at stalled replication forks, which arise in vivo from mismatched or misaligned primer ends. These misaligned primers can be extended by PolIV. Exhibits no 3'-5' exonuclease (proofreading) activity. May be involved in translesional synthesis, in conjunction with the beta clamp from PolIII. The chain is DNA polymerase IV 2 (dinB2) from Rhizobium meliloti (strain 1021) (Ensifer meliloti).